The following is a 423-amino-acid chain: Tubulin beta-2 chain (423 aa).

Glu-44, Ser-113, Gly-117, Thr-118, Gly-119, Asn-179, and Asn-201 together coordinate GTP. Glu-44 is a Mg(2+) binding site. Residues 394–423 are disordered; the sequence is VSEYQQYQDATAEEEGEYDEDEDDEGGDYA. Residues 404 to 423 are compositionally biased toward acidic residues; that stretch reads TAEEEGEYDEDEDDEGGDYA.

It belongs to the tubulin family. Dimer of alpha and beta chains. A typical microtubule is a hollow water-filled tube with an outer diameter of 25 nm and an inner diameter of 15 nM. Alpha-beta heterodimers associate head-to-tail to form protofilaments running lengthwise along the microtubule wall with the beta-tubulin subunit facing the microtubule plus end conferring a structural polarity. Microtubules usually have 13 protofilaments but different protofilament numbers can be found in some organisms and specialized cells. Mg(2+) serves as cofactor.

The protein localises to the cytoplasm. It is found in the cytoskeleton. Functionally, tubulin is the major constituent of microtubules, a cylinder consisting of laterally associated linear protofilaments composed of alpha- and beta-tubulin heterodimers. Microtubules grow by the addition of GTP-tubulin dimers to the microtubule end, where a stabilizing cap forms. Below the cap, tubulin dimers are in GDP-bound state, owing to GTPase activity of alpha-tubulin. This Oomycete-like sp. (strain MacKay2000) protein is Tubulin beta-2 chain (TUBB2).